A 249-amino-acid polypeptide reads, in one-letter code: NAD(P)H-quinone oxidoreductase subunit K (249 aa).

[4Fe-4S] cluster is bound by residues C65, C66, C130, and C161.

It belongs to the complex I 20 kDa subunit family. In terms of assembly, NDH-1 can be composed of about 15 different subunits; different subcomplexes with different compositions have been identified which probably have different functions. The cofactor is [4Fe-4S] cluster.

It localises to the cellular thylakoid membrane. It carries out the reaction a plastoquinone + NADH + (n+1) H(+)(in) = a plastoquinol + NAD(+) + n H(+)(out). It catalyses the reaction a plastoquinone + NADPH + (n+1) H(+)(in) = a plastoquinol + NADP(+) + n H(+)(out). NDH-1 shuttles electrons from an unknown electron donor, via FMN and iron-sulfur (Fe-S) centers, to quinones in the respiratory and/or the photosynthetic chain. The immediate electron acceptor for the enzyme in this species is believed to be plastoquinone. Couples the redox reaction to proton translocation, and thus conserves the redox energy in a proton gradient. Cyanobacterial NDH-1 also plays a role in inorganic carbon-concentration. This chain is NAD(P)H-quinone oxidoreductase subunit K, found in Prochlorococcus marinus (strain NATL2A).